A 333-amino-acid polypeptide reads, in one-letter code: Biotin synthase (333 aa).

A Radical SAM core domain is found at 46 to 275 (YYGKKVKLNM…TKEIRISGGR (230 aa)). [4Fe-4S] cluster-binding residues include C64, C68, and C71. [2Fe-2S] cluster contacts are provided by C108, C140, C200, and R270.

Belongs to the radical SAM superfamily. Biotin synthase family. As to quaternary structure, homodimer. [4Fe-4S] cluster is required as a cofactor. The cofactor is [2Fe-2S] cluster.

The enzyme catalyses (4R,5S)-dethiobiotin + (sulfur carrier)-SH + 2 reduced [2Fe-2S]-[ferredoxin] + 2 S-adenosyl-L-methionine = (sulfur carrier)-H + biotin + 2 5'-deoxyadenosine + 2 L-methionine + 2 oxidized [2Fe-2S]-[ferredoxin]. It functions in the pathway cofactor biosynthesis; biotin biosynthesis; biotin from 7,8-diaminononanoate: step 2/2. In terms of biological role, catalyzes the conversion of dethiobiotin (DTB) to biotin by the insertion of a sulfur atom into dethiobiotin via a radical-based mechanism. The chain is Biotin synthase from Halalkalibacterium halodurans (strain ATCC BAA-125 / DSM 18197 / FERM 7344 / JCM 9153 / C-125) (Bacillus halodurans).